Reading from the N-terminus, the 487-residue chain is 3-octaprenyl-4-hydroxybenzoate carboxy-lyase (487 aa).

Asn172 contacts Mn(2+). Residues 175 to 177 (IYR), 189 to 191 (RWL), and 194 to 195 (RG) each bind prenylated FMN. Glu238 lines the Mn(2+) pocket. The Proton donor role is filled by Asp287.

This sequence belongs to the UbiD family. In terms of assembly, homohexamer. Requires prenylated FMN as cofactor. Mn(2+) serves as cofactor.

The protein localises to the cell membrane. The catalysed reaction is a 4-hydroxy-3-(all-trans-polyprenyl)benzoate + H(+) = a 2-(all-trans-polyprenyl)phenol + CO2. It functions in the pathway cofactor biosynthesis; ubiquinone biosynthesis. In terms of biological role, catalyzes the decarboxylation of 3-octaprenyl-4-hydroxy benzoate to 2-octaprenylphenol, an intermediate step in ubiquinone biosynthesis. The sequence is that of 3-octaprenyl-4-hydroxybenzoate carboxy-lyase from Actinobacillus pleuropneumoniae serotype 5b (strain L20).